The primary structure comprises 391 residues: Dual-specificity RNA methyltransferase RlmN (391 aa).

The active-site Proton acceptor is the glutamate 115. Residues 121-363 enclose the Radical SAM core domain; the sequence is EENRGTLCIS…SPIRTPRGED (243 aa). Residues cysteine 128 and cysteine 368 are joined by a disulfide bond. [4Fe-4S] cluster-binding residues include cysteine 135, cysteine 139, and cysteine 142. Residues 194–195, serine 226, 248–250, and asparagine 325 each bind S-adenosyl-L-methionine; these read GE and SFH. Cysteine 368 serves as the catalytic S-methylcysteine intermediate.

It belongs to the radical SAM superfamily. RlmN family. Requires [4Fe-4S] cluster as cofactor.

The protein resides in the cytoplasm. It carries out the reaction adenosine(2503) in 23S rRNA + 2 reduced [2Fe-2S]-[ferredoxin] + 2 S-adenosyl-L-methionine = 2-methyladenosine(2503) in 23S rRNA + 5'-deoxyadenosine + L-methionine + 2 oxidized [2Fe-2S]-[ferredoxin] + S-adenosyl-L-homocysteine. It catalyses the reaction adenosine(37) in tRNA + 2 reduced [2Fe-2S]-[ferredoxin] + 2 S-adenosyl-L-methionine = 2-methyladenosine(37) in tRNA + 5'-deoxyadenosine + L-methionine + 2 oxidized [2Fe-2S]-[ferredoxin] + S-adenosyl-L-homocysteine. Its function is as follows. Specifically methylates position 2 of adenine 2503 in 23S rRNA and position 2 of adenine 37 in tRNAs. m2A2503 modification seems to play a crucial role in the proofreading step occurring at the peptidyl transferase center and thus would serve to optimize ribosomal fidelity. The sequence is that of Dual-specificity RNA methyltransferase RlmN from Paracoccus denitrificans (strain Pd 1222).